A 235-amino-acid polypeptide reads, in one-letter code: C-type lectin domain family 2 member D-related protein (235 aa).

The segment at 1 to 50 (MPSSAHLQDPPPHLSRTLTQDEEQTSLRQSSSCGPSTTSASASESLSGST) is disordered. Topologically, residues 1–75 (MPSSAHLQDP…KIIPTESAAK (75 aa)) are cytoplasmic. A compositionally biased stretch (low complexity) spans 30 to 50 (SSSCGPSTTSASASESLSGST). The helical; Signal-anchor for type II membrane protein transmembrane segment at 76–96 (LLCCYAVFMALTVVVIALSIA) threads the bilayer. Residues 97–235 (LSVKKTPQIS…KLNSYTSQCP (139 aa)) lie on the Extracellular side of the membrane. Residues 121–232 (FGNKCYYFNE…ICSKLNSYTS (112 aa)) form the C-type lectin domain. Asparagine 134 carries an N-linked (GlcNAc...) asparagine glycan.

The protein localises to the cell membrane. Lectin-type cell surface receptor. This chain is C-type lectin domain family 2 member D-related protein, found in Rattus norvegicus (Rat).